We begin with the raw amino-acid sequence, 224 residues long: Glutathione S-transferase U4 (224 aa).

The region spanning E6–P85 is the GST N-terminal domain. Glutathione is bound by residues S16 to P17, N42 to K43, K56 to V57, and E69 to S70. In terms of domain architecture, GST C-terminal spans D90–V217. T151 carries the phosphothreonine modification.

The protein belongs to the GST superfamily. Tau family.

It localises to the cytoplasm. It is found in the cytosol. The enzyme catalyses RX + glutathione = an S-substituted glutathione + a halide anion + H(+). Its function is as follows. May be involved in the conjugation of reduced glutathione to a wide number of exogenous and endogenous hydrophobic electrophiles and have a detoxification role against certain herbicides. The chain is Glutathione S-transferase U4 (GSTU4) from Arabidopsis thaliana (Mouse-ear cress).